The sequence spans 506 residues: ATP synthase subunit alpha, chloroplastic (506 aa).

An ATP-binding site is contributed by 172–179; that stretch reads GDRQTGKT.

Belongs to the ATPase alpha/beta chains family. In terms of assembly, F-type ATPases have 2 components, CF(1) - the catalytic core - and CF(0) - the membrane proton channel. CF(1) has five subunits: alpha(3), beta(3), gamma(1), delta(1), epsilon(1). CF(0) has four main subunits: a, b, b' and c.

Its subcellular location is the plastid. It localises to the chloroplast thylakoid membrane. It catalyses the reaction ATP + H2O + 4 H(+)(in) = ADP + phosphate + 5 H(+)(out). In terms of biological role, produces ATP from ADP in the presence of a proton gradient across the membrane. The alpha chain is a regulatory subunit. The chain is ATP synthase subunit alpha, chloroplastic from Pleurastrum terricola (Filamentous green alga).